Reading from the N-terminus, the 299-residue chain is MAKTLPFSRALLLSLSILLVARAISAGDIAIYWGQNGGEGTLASTCDTGRYAYVIVSFVTTFGNFRAPVVNLAGHCDPAAGTCTGLSDEIRSCQGKDIKVLMSIGGGAGDYSLVSEADADNFADYLWNNFLGGQSSSRPLGDAVLDGIDFDIELGTTTFYDTLARALSSRSTQAAKVYLTAAPQCPHPDSHLDAALNTGLFDNVWIQFYNNPLAQCQYSSGNTNDILSSWNTWTSSTTAGKIFLGLPAAPEAAGSGYIPPDVLTGQILPQIKTSAKYGGVMLYSKFYDTTYSTTIKDQV.

Residues 1 to 26 constitute an amyloplast transit peptide; that stretch reads MAKTLPFSRALLLSLSILLVARAISA. One can recognise a GH18 domain in the interval 27–299; the sequence is GDIAIYWGQN…TYSTTIKDQV (273 aa). 2 disulfides stabilise this stretch: Cys-46/Cys-93 and Cys-76/Cys-83. The active-site Proton donor is Glu-153. A disulfide bridge links Cys-185 with Cys-216.

This sequence belongs to the glycosyl hydrolase 18 family. Chitinase class III subfamily. In terms of assembly, monomer. Highly expressed in seeds and to a lesser extent in the skin of the pomegranate fruit (at protein level). Not expressed in leaves or flesh of the fruit (at protein level).

It localises to the plastid. The protein localises to the amyloplast. The enzyme catalyses Random endo-hydrolysis of N-acetyl-beta-D-glucosaminide (1-&gt;4)-beta-linkages in chitin and chitodextrins.. Activity is not affected by addition of 10 mM Ca(2+) or removal of Ca(2+). In terms of biological role, hydrolyzes chitin. Probable calcium storage protein of the seeds. Binds calcium ions with high capacity and low affinity. Involved in seed germination. The chain is Acidic endochitinase Pun g 14, amyloplastic from Punica granatum (Pomegranate).